The following is a 136-amino-acid chain: Translation initiation factor 5A (136 aa).

Hypusine is present on Lys-38.

It belongs to the eIF-5A family.

It localises to the cytoplasm. Functionally, functions by promoting the formation of the first peptide bond. The protein is Translation initiation factor 5A of Methanopyrus kandleri (strain AV19 / DSM 6324 / JCM 9639 / NBRC 100938).